The primary structure comprises 866 residues: Ribosome biogenesis protein BOP1 homolog (866 aa).

Disordered stretches follow at residues 1 to 180 (MVAN…EETR) and 214 to 241 (PPEAKSRFKGGKNQDEYAAGDTSDEEDI). Acidic residues-rich tracts occupy residues 37 to 52 (VDDESASDYYESDEEN), 60 to 146 (GNDE…LEEP), and 167 to 179 (TAEDEDEEDDEET). WD repeat units follow at residues 527 to 566 (GHTDMIRSVSIEPKGEYLVTGSDDQTVKIWEVSTARCIRT), 568 to 608 (PTGD…SLLV), 697 to 735 (KSKGLIQCVLFHPVKPCLFVATQRHVRVYDLVKQELLKK), 738 to 777 (PSCKWISSMAIHPKGDNLLVATYEKKMMWFDLDLSTRPYQ), 781 to 820 (LHHSAIRNVAFHLRYPLFASASDDRSVIVSHGMVYNDLLQ), and 836 to 866 (VNDFGAFDVVFHPTQPWLFSSGADNTVRLYT).

This sequence belongs to the WD repeat BOP1/ERB1 family.

It is found in the nucleus. The protein resides in the nucleolus. Its subcellular location is the nucleoplasm. Required for maturation of ribosomal RNAs and formation of the large ribosomal subunit. The sequence is that of Ribosome biogenesis protein BOP1 homolog from Aedes aegypti (Yellowfever mosquito).